We begin with the raw amino-acid sequence, 389 residues long: Phospho-N-acetylmuramoyl-pentapeptide-transferase (389 aa).

A run of 10 helical transmembrane segments spans residues 21–41, 70–90, 97–117, 134–154, 189–209, 222–242, 259–279, 286–306, 311–331, and 366–386; these read FITFRAVFATLTALVIGLVTG, GTPTMGGVLILVSIGISTLLW, FIWVVLIVTLGFGAVGWVDDY, YMWQSIIGLFAAIYLAFSVSA, TISYPLGVWGFIALTYFVIVG, GLAIMPTVMVGTALGLFAYLT, AGELIIFCGAMAGAGLAFLWF, VFMGDVGALALGGALGTIAVI, VVLFIMGGIFVVETLSVMLQV, and QVVVRFWIITMMLVLFGLSTL.

It belongs to the glycosyltransferase 4 family. MraY subfamily. It depends on Mg(2+) as a cofactor.

It localises to the cell inner membrane. It carries out the reaction UDP-N-acetyl-alpha-D-muramoyl-L-alanyl-gamma-D-glutamyl-meso-2,6-diaminopimeloyl-D-alanyl-D-alanine + di-trans,octa-cis-undecaprenyl phosphate = di-trans,octa-cis-undecaprenyl diphospho-N-acetyl-alpha-D-muramoyl-L-alanyl-D-glutamyl-meso-2,6-diaminopimeloyl-D-alanyl-D-alanine + UMP. The protein operates within cell wall biogenesis; peptidoglycan biosynthesis. Functionally, catalyzes the initial step of the lipid cycle reactions in the biosynthesis of the cell wall peptidoglycan: transfers peptidoglycan precursor phospho-MurNAc-pentapeptide from UDP-MurNAc-pentapeptide onto the lipid carrier undecaprenyl phosphate, yielding undecaprenyl-pyrophosphoryl-MurNAc-pentapeptide, known as lipid I. In Janthinobacterium sp. (strain Marseille) (Minibacterium massiliensis), this protein is Phospho-N-acetylmuramoyl-pentapeptide-transferase.